The sequence spans 575 residues: Estrogen receptor beta (575 aa).

The modulating stretch occupies residues Met1–Phe160. Positions Asp108–Gly151 are disordered. Over residues Gly134–Pro145 the composition is skewed to acidic residues. 2 consecutive NR C4-type zinc fingers follow at residues Cys161–Cys181 and Cys197–Cys221. Residues Cys161–Met226 constitute a DNA-binding region (nuclear receptor). The 237-residue stretch at Ser290–Asn526 folds into the NR LBD domain. Over residues Val537 to Asn549 the composition is skewed to polar residues. Positions Val537–His557 are disordered.

The protein belongs to the nuclear hormone receptor family. NR3 subfamily. In terms of assembly, binds DNA as a homodimer. Can form a heterodimer with ER-alpha. Ovary and testis.

Its subcellular location is the nucleus. Its function is as follows. Binds estrogens with an affinity similar to that of ER-alpha, and activates expression of reporter genes containing estrogen response elements (ERE) in an estrogen-dependent manner. This is Estrogen receptor beta (esr2) from Ictalurus punctatus (Channel catfish).